The following is a 391-amino-acid chain: Chorismate synthase (391 aa).

NADP(+) is bound at residue Arg48. FMN contacts are provided by residues 126–128 (RAS), Gly286, 301–305 (KPTSS), and Arg328.

Belongs to the chorismate synthase family. FMNH2 is required as a cofactor.

The catalysed reaction is 5-O-(1-carboxyvinyl)-3-phosphoshikimate = chorismate + phosphate. The protein operates within metabolic intermediate biosynthesis; chorismate biosynthesis; chorismate from D-erythrose 4-phosphate and phosphoenolpyruvate: step 7/7. In terms of biological role, catalyzes the anti-1,4-elimination of the C-3 phosphate and the C-6 proR hydrogen from 5-enolpyruvylshikimate-3-phosphate (EPSP) to yield chorismate, which is the branch point compound that serves as the starting substrate for the three terminal pathways of aromatic amino acid biosynthesis. This reaction introduces a second double bond into the aromatic ring system. This chain is Chorismate synthase, found in Saccharolobus islandicus (strain M.16.27) (Sulfolobus islandicus).